We begin with the raw amino-acid sequence, 340 residues long: Ferrochelatase (340 aa).

The Fe cation site is built by histidine 189 and glutamate 292.

The protein belongs to the ferrochelatase family.

It is found in the cytoplasm. It carries out the reaction heme b + 2 H(+) = protoporphyrin IX + Fe(2+). Its pathway is porphyrin-containing compound metabolism; protoheme biosynthesis; protoheme from protoporphyrin-IX: step 1/1. Its function is as follows. Catalyzes the ferrous insertion into protoporphyrin IX. The sequence is that of Ferrochelatase from Pseudomonas syringae pv. tomato (strain ATCC BAA-871 / DC3000).